A 342-amino-acid chain; its full sequence is uncharacterized protein (342 aa).

Arginine 69 contacts substrate. The active-site Proton donor is the histidine 176. Substrate is bound at residue aspartate 240.

It belongs to the aldose epimerase family.

This is an uncharacterized protein from Saccharomyces cerevisiae (strain ATCC 204508 / S288c) (Baker's yeast).